The sequence spans 491 residues: Polybrominated aromatic compounds synthase (491 aa).

Cys-437 is a heme binding site.

The protein belongs to the cytochrome P450 family. Requires heme as cofactor.

Cytochrome P450 protein involved in the biosynthesis of polybrominated aromatic organic compounds. In the presence of ferredoxin, ferredoxin reductase and NADH, catalyzes the coupling of bromophenols and bromopyrroles, forming various polybrominated biphenyls and hydroxylated polybrominated diphenyl ethers (OH-BDE). Can also mediate the heterocoupling of 3,5-dibromocatechol. Can also use chlorinated phenolic substrates. 2,3,4-tribromopyrrole could be the physiological substrate. In Pseudoalteromonas luteoviolacea (strain 2ta16), this protein is Polybrominated aromatic compounds synthase.